Consider the following 489-residue polypeptide: CUGBP Elav-like family member 1-B (489 aa).

3 consecutive RRM domains span residues 16–99 (IKMF…PADS), 108–188 (RKLF…FADT), and 404–482 (ANLF…LKRS).

This sequence belongs to the CELF/BRUNOL family. Oligomer. Oligomerization is required for RNA-binding and EDEN-dependent deadenylation. Post-translationally, phosphorylated during oocyte maturation and dephosphorylated following egg activation. Dephosphorylation is calcium dependent and correlates with the increase in the activity of EDEN-dependent deadenylation.

It localises to the nucleus. The protein resides in the cytoplasm. RNA-binding protein implicated in the regulation of several post-transcriptional events. May be involved in pre-mRNA alternative splicing, mRNA translation activation and stability. Mediates the rapid and sequence-specific cytoplasmic deadenylation of EDEN-containing maternal mRNAs following fertilization. Binds to AU-rich sequences (AREs) of jun mRNA. Binds to the embryonic deadenylation element (EDEN) motif localized in the 3'-UTR of maternal mRNAs. Binds to RNA containing several repeats of the consensus sequence 5'-UGU-3'. EDEN-dependent deadenylation is enhanced by the presence of an additional cis element composed of three AUU repeats. The chain is CUGBP Elav-like family member 1-B (cugbp1-b) from Xenopus laevis (African clawed frog).